We begin with the raw amino-acid sequence, 520 residues long: MIARQQCVRGGPRGFSCGSAIVGGGKRGAFSSVSMSGGAGRCSSGGFGSRSLYNLRGNKSISMSVAGSRQGACFGGAGGFGTGGFGGGFGGSFSGKGGPGFPVCPAGGIQEVTINQSLLTPLHVEIDPEIQKVRTEEREQIKLLNNKFASFIDKVQFLEQQNKVLETKWNLLQQQTTTTSSKNLEPLFETYLSVLRKQLDTLGNDKGRLQSELKTMQDSVEDFKTKYEEEINKRTAAENDFVVLKKDVDAAYLNKVELEAKVDSLNDEINFLKVLYDAELSQMQTHVSDTSVVLSMDNNRNLDLDSIIAEVRAQYEEIAQRSKAEAEALYQTKVQQLQISVDQHGDNLKNTKSEIAELNRMIQRLRAEIENIKKQCQTLQVSVADAEQRGENALKDAHSKRVELEAALQQAKEELARMLREYQELMSVKLALDIEIATYRKLLEGEEYRMSGECQSAVSISVVSGSTSTGGISGGLGSGSGFGLSSGFGSGSGSGFGFGGSVSGSSSSKIISTTTLNKRR.

The tract at residues 1–136 (MIARQQCVRG…DPEIQKVRTE (136 aa)) is head. R13 bears the Omega-N-methylarginine mark. A coil 1A region spans residues 137-172 (EREQIKLLNNKFASFIDKVQFLEQQNKVLETKWNLL). The 314-residue stretch at 137-450 (EREQIKLLNN…KLLEGEEYRM (314 aa)) folds into the IF rod domain. A linker 1 region spans residues 173 to 191 (QQQTTTTSSKNLEPLFETY). Residues 192–284 (LSVLRKQLDT…LYDAELSQMQ (93 aa)) form a coil 1B region. The segment at 285-307 (THVSDTSVVLSMDNNRNLDLDSI) is linker 12. The interval 308 to 447 (IAEVRAQYEE…TYRKLLEGEE (140 aa)) is coil 2. Residues 448–520 (YRMSGECQSA…ISTTTLNKRR (73 aa)) are tail. Residues 500–520 (GSVSGSSSSKIISTTTLNKRR) form a disordered region. Residues 503–514 (SGSSSSKIISTT) are compositionally biased toward low complexity.

This sequence belongs to the intermediate filament family. As to quaternary structure, heterotetramer of two type I and two type II keratins. Keratin-4 is generally associated with keratin-13. In terms of tissue distribution, detected in the suprabasal layer of the stratified epithelium of the esophagus, exocervix, vagina, mouth and lingual mucosa, and in cells and cell clusters in the mucosa and serous gland ducts of the esophageal submucosa (at protein level). Expressed widely in the exocervix and esophageal epithelium, with lowest levels detected in the basal cell layer.

The polypeptide is Keratin, type II cytoskeletal 4 (KRT4) (Homo sapiens (Human)).